The sequence spans 324 residues: Acetyl-coenzyme A carboxylase carboxyl transferase subunit alpha (324 aa).

Positions Ile37 to Gln291 constitute a CoA carboxyltransferase C-terminal domain.

This sequence belongs to the AccA family. Acetyl-CoA carboxylase is a heterohexamer composed of biotin carboxyl carrier protein (AccB), biotin carboxylase (AccC) and two subunits each of ACCase subunit alpha (AccA) and ACCase subunit beta (AccD).

It localises to the cytoplasm. It carries out the reaction N(6)-carboxybiotinyl-L-lysyl-[protein] + acetyl-CoA = N(6)-biotinyl-L-lysyl-[protein] + malonyl-CoA. It participates in lipid metabolism; malonyl-CoA biosynthesis; malonyl-CoA from acetyl-CoA: step 1/1. Component of the acetyl coenzyme A carboxylase (ACC) complex. First, biotin carboxylase catalyzes the carboxylation of biotin on its carrier protein (BCCP) and then the CO(2) group is transferred by the carboxyltransferase to acetyl-CoA to form malonyl-CoA. This chain is Acetyl-coenzyme A carboxylase carboxyl transferase subunit alpha, found in Bacillus cereus (strain ATCC 14579 / DSM 31 / CCUG 7414 / JCM 2152 / NBRC 15305 / NCIMB 9373 / NCTC 2599 / NRRL B-3711).